Here is a 619-residue protein sequence, read N- to C-terminus: Dihydroxy-acid dehydratase (619 aa).

A Mg(2+)-binding site is contributed by D81. C122 contacts [2Fe-2S] cluster. D123 and K124 together coordinate Mg(2+). The residue at position 124 (K124) is an N6-carboxylysine. Residue C195 participates in [2Fe-2S] cluster binding. E494 lines the Mg(2+) pocket. S520 acts as the Proton acceptor in catalysis.

This sequence belongs to the IlvD/Edd family. In terms of assembly, homodimer. The cofactor is [2Fe-2S] cluster. Mg(2+) serves as cofactor.

It carries out the reaction (2R)-2,3-dihydroxy-3-methylbutanoate = 3-methyl-2-oxobutanoate + H2O. The catalysed reaction is (2R,3R)-2,3-dihydroxy-3-methylpentanoate = (S)-3-methyl-2-oxopentanoate + H2O. It participates in amino-acid biosynthesis; L-isoleucine biosynthesis; L-isoleucine from 2-oxobutanoate: step 3/4. The protein operates within amino-acid biosynthesis; L-valine biosynthesis; L-valine from pyruvate: step 3/4. Functionally, functions in the biosynthesis of branched-chain amino acids. Catalyzes the dehydration of (2R,3R)-2,3-dihydroxy-3-methylpentanoate (2,3-dihydroxy-3-methylvalerate) into 2-oxo-3-methylpentanoate (2-oxo-3-methylvalerate) and of (2R)-2,3-dihydroxy-3-methylbutanoate (2,3-dihydroxyisovalerate) into 2-oxo-3-methylbutanoate (2-oxoisovalerate), the penultimate precursor to L-isoleucine and L-valine, respectively. The chain is Dihydroxy-acid dehydratase from Shewanella putrefaciens (strain CN-32 / ATCC BAA-453).